We begin with the raw amino-acid sequence, 246 residues long: Small ribosomal subunit protein uS2 (246 aa).

This sequence belongs to the universal ribosomal protein uS2 family.

The sequence is that of Small ribosomal subunit protein uS2 from Pseudomonas paraeruginosa (strain DSM 24068 / PA7) (Pseudomonas aeruginosa (strain PA7)).